The following is a 599-amino-acid chain: Spermatogenesis-associated protein 7 (599 aa).

Residues 163-205 (KSSKVITNGPEKNSSSSPSSVDYAASGPRKLSSGALYGRRPRS) are disordered. The segment covering 166–175 (KVITNGPEKN) has biased composition (polar residues).

Found in a complex with CFAP410, NEK1 and SPATA7. Interacts with NEK1. Interacts with RPGRIP1. Interacts with RPGR. Interacts with NPHP4. Interacts with NPHP1. Interacts with AHI1.

The protein localises to the cytoplasm. Its subcellular location is the cytoskeleton. It localises to the cilium axoneme. It is found in the cilium basal body. The protein resides in the cell projection. The protein localises to the cilium. Its subcellular location is the photoreceptor outer segment. Functionally, involved in the maintenance of both rod and cone photoreceptor cells. It is required for recruitment and proper localization of RPGRIP1 to the photoreceptor connecting cilium (CC), as well as photoreceptor-specific localization of proximal CC proteins at the distal CC. Maintenance of protein localization at the photoreceptor-specific distal CC is essential for normal microtubule stability and to prevent photoreceptor degeneration. This Homo sapiens (Human) protein is Spermatogenesis-associated protein 7 (SPATA7).